The primary structure comprises 608 residues: Elongation factor 4 (608 aa).

Residues 11-193 enclose the tr-type G domain; the sequence is SHIRNFSIVA…AIVHKLPAPK (183 aa). GTP contacts are provided by residues 23 to 28 and 140 to 143; these read DHGKST and NKID.

This sequence belongs to the TRAFAC class translation factor GTPase superfamily. Classic translation factor GTPase family. LepA subfamily.

The protein localises to the cell inner membrane. The catalysed reaction is GTP + H2O = GDP + phosphate + H(+). In terms of biological role, required for accurate and efficient protein synthesis under certain stress conditions. May act as a fidelity factor of the translation reaction, by catalyzing a one-codon backward translocation of tRNAs on improperly translocated ribosomes. Back-translocation proceeds from a post-translocation (POST) complex to a pre-translocation (PRE) complex, thus giving elongation factor G a second chance to translocate the tRNAs correctly. Binds to ribosomes in a GTP-dependent manner. This is Elongation factor 4 from Rhizobium meliloti (strain 1021) (Ensifer meliloti).